The following is a 132-amino-acid chain: UPF0357 protein YCL012C (132 aa).

A signal peptide spans 1–25 (MWDLFYFKVFFWVVLISLCIFMVHR).

Belongs to the UPF0357 family.

This Saccharomyces bayanus (Yeast) protein is UPF0357 protein YCL012C (YCL012C).